A 415-amino-acid chain; its full sequence is Serine hydroxymethyltransferase (415 aa).

Residues leucine 117 and 121 to 123 contribute to the (6S)-5,6,7,8-tetrahydrofolate site; that span reads GHL. Lysine 226 is modified (N6-(pyridoxal phosphate)lysine). (6S)-5,6,7,8-tetrahydrofolate-binding positions include glutamate 241 and 349 to 351; that span reads SPF.

The protein belongs to the SHMT family. In terms of assembly, homodimer. It depends on pyridoxal 5'-phosphate as a cofactor.

Its subcellular location is the cytoplasm. It carries out the reaction (6R)-5,10-methylene-5,6,7,8-tetrahydrofolate + glycine + H2O = (6S)-5,6,7,8-tetrahydrofolate + L-serine. It functions in the pathway one-carbon metabolism; tetrahydrofolate interconversion. The protein operates within amino-acid biosynthesis; glycine biosynthesis; glycine from L-serine: step 1/1. Functionally, catalyzes the reversible interconversion of serine and glycine with tetrahydrofolate (THF) serving as the one-carbon carrier. This reaction serves as the major source of one-carbon groups required for the biosynthesis of purines, thymidylate, methionine, and other important biomolecules. Also exhibits THF-independent aldolase activity toward beta-hydroxyamino acids, producing glycine and aldehydes, via a retro-aldol mechanism. The sequence is that of Serine hydroxymethyltransferase from Geotalea daltonii (strain DSM 22248 / JCM 15807 / FRC-32) (Geobacter daltonii).